A 460-amino-acid chain; its full sequence is Fumarate hydratase class II (460 aa).

Substrate-binding positions include 95-97, 126-129, 136-138, and Thr184; these read SGT, HPND, and SSN. His185 (proton donor/acceptor) is an active-site residue. Ser315 is a catalytic residue. Substrate-binding positions include Ser316 and 321–323; that span reads KIN.

The protein belongs to the class-II fumarase/aspartase family. Fumarase subfamily. As to quaternary structure, homotetramer.

It localises to the cytoplasm. The catalysed reaction is (S)-malate = fumarate + H2O. It functions in the pathway carbohydrate metabolism; tricarboxylic acid cycle; (S)-malate from fumarate: step 1/1. In terms of biological role, involved in the TCA cycle. Catalyzes the stereospecific interconversion of fumarate to L-malate. This chain is Fumarate hydratase class II, found in Chlamydia caviae (strain ATCC VR-813 / DSM 19441 / 03DC25 / GPIC) (Chlamydophila caviae).